Here is a 172-residue protein sequence, read N- to C-terminus: R-phycocyanin beta chain (172 aa).

(2R,3E)-phycoerythrobilin contacts are provided by Asn-35 and Asp-39. (2R,3E)-phycocyanobilin-binding positions include Asn-72, Cys-82, and 84–85; that span reads RD. At Asn-72 the chain carries N4-methylasparagine. (2R,3E)-phycoerythrobilin is bound by residues 149–151 and Cys-153; that span reads PAG.

This sequence belongs to the phycobiliprotein family. In terms of assembly, heterododecamer of 6 alpha and 6 beta chains. The basic functional unit of phycobiliproteins is a ring-shaped hexamer formed from two back-to-back trimers contacting via the alpha chain subunits. The trimers are composed of alpha/beta subunit heterodimers arranged around a three-fold axis of symmetry. The phycoerythrins also contain a gamma subunit which is located in the center of the hexamer. Contains one covalently linked phycocyanobilin chromophore and one covalently linked phycoerythrobilin chromophore.

It is found in the plastid. The protein localises to the chloroplast thylakoid membrane. In terms of biological role, light-harvesting photosynthetic tetrapyrrole chromophore-protein from the phycobiliprotein complex (phycobilisome, PBS). Phycocyanin is the major phycobiliprotein in the PBS rod. The sequence is that of R-phycocyanin beta chain (rpcB) from Polysiphonia urceolata (Red alga).